The primary structure comprises 101 residues: Large ribosomal subunit protein uL23 (101 aa).

It belongs to the universal ribosomal protein uL23 family. As to quaternary structure, part of the 50S ribosomal subunit. Contacts protein L29, and trigger factor when it is bound to the ribosome.

In terms of biological role, one of the early assembly proteins it binds 23S rRNA. One of the proteins that surrounds the polypeptide exit tunnel on the outside of the ribosome. Forms the main docking site for trigger factor binding to the ribosome. In Pseudarthrobacter chlorophenolicus (strain ATCC 700700 / DSM 12829 / CIP 107037 / JCM 12360 / KCTC 9906 / NCIMB 13794 / A6) (Arthrobacter chlorophenolicus), this protein is Large ribosomal subunit protein uL23.